A 456-amino-acid chain; its full sequence is Chromosomal replication initiator protein DnaA 1 (456 aa).

The tract at residues 1-68 (MRAWEEFLLL…KASLINNNGK (68 aa)) is domain I, interacts with DnaA modulators. A domain II region spans residues 68-101 (KPIRVRVTSLDKSTPFKETQIQQEKTAYFTMKYG). The interval 102-320 (DIDPNMSFAN…HALTTLAKRV (219 aa)) is domain III, AAA+ region. Residues Ser-150, Gly-152, Lys-153, and Thr-154 each contribute to the ATP site. The tract at residues 321-456 (AYKKLSHQML…AYQSLDFIED (136 aa)) is domain IV, binds dsDNA.

Belongs to the DnaA family. In terms of assembly, oligomerizes as a right-handed, spiral filament on DNA at oriC.

It localises to the cytoplasm. Plays an essential role in the initiation and regulation of chromosomal replication. ATP-DnaA binds to the origin of replication (oriC) to initiate formation of the DNA replication initiation complex once per cell cycle. Binds the DnaA box (a 9 base pair repeat at the origin) and separates the double-stranded (ds)DNA. Forms a right-handed helical filament on oriC DNA; dsDNA binds to the exterior of the filament while single-stranded (ss)DNA is stabiized in the filament's interior. The ATP-DnaA-oriC complex binds and stabilizes one strand of the AT-rich DNA unwinding element (DUE), permitting loading of DNA polymerase. After initiation quickly degrades to an ADP-DnaA complex that is not apt for DNA replication. Binds acidic phospholipids. The protein is Chromosomal replication initiator protein DnaA 1 of Chlamydia trachomatis serovar D (strain ATCC VR-885 / DSM 19411 / UW-3/Cx).